Reading from the N-terminus, the 212-residue chain is Large ribosomal subunit protein uL3 (212 aa).

Gln-153 bears the N5-methylglutamine mark.

Belongs to the universal ribosomal protein uL3 family. In terms of assembly, part of the 50S ribosomal subunit. Forms a cluster with proteins L14 and L19. In terms of processing, methylated by PrmB.

In terms of biological role, one of the primary rRNA binding proteins, it binds directly near the 3'-end of the 23S rRNA, where it nucleates assembly of the 50S subunit. This Azoarcus sp. (strain BH72) protein is Large ribosomal subunit protein uL3.